A 415-amino-acid polypeptide reads, in one-letter code: Leucine-rich repeat-containing protein 34 (415 aa).

2 LRR repeats span residues 246–272 and 274–296; these read TLRY…LKSN and TLEV…LSET.

As to quaternary structure, interacts with NPM1 and NCL.

It localises to the nucleus. The protein localises to the nucleolus. Its subcellular location is the cytoplasm. Functionally, highly expressed in stem cells where it may be involved in regulation of pluripotency. In embryonic stem cells (ESCs), important for normal expression of the pluripotency regulators POU5F1/OCT4 and KLF4. Also important for expression of the ectodermal marker gene NES and the endodermal marker gene GATA4. Promotes stem cell proliferation in vitro. The protein is Leucine-rich repeat-containing protein 34 (Lrrc34) of Rattus norvegicus (Rat).